A 356-amino-acid chain; its full sequence is Decorin (356 aa).

The first 15 residues, 1-15 (MRLVLFILLLPVCLA), serve as a signal peptide directing secretion. Positions 16–29 (TPFHQKGLFDFMLE) are excised as a propeptide. O-linked (Xyl...) (glycosaminoglycan) serine glycosylation occurs at Ser45. 2 cysteine pairs are disulfide-bonded: Cys51–Cys57 and Cys55–Cys64. LRR repeat units follow at residues 70 to 90 (ERVPKDLPPDTTLLDLQNNKI), 91 to 114 (TEIRDGDFKNLKNLHALILVNNKI), 115 to 138 (SKISPQAFAPLKKLERLYLSKNNL), 139 to 159 (KELPENMPKSLQEIRAHENEI), 160 to 183 (SKLRKAVFNGLNQVIVLELGTNPL), 184 to 209 (KSSGIENGAFQGMKRLSYIRIADTNI), 210 to 230 (TSIPKGLPPSLTELHLDGNKI), 231 to 254 (SKIDAEGLSGLTNLAKLGLSFNSI), 255 to 278 (SSVENGSLNNVPHLRELHLNNNEL), 279 to 301 (VRVPSGLGEHKYIQVVYLHNNKI), 302 to 331 (ASIGINDFCPLGYNTKKATYSGVSLFSNPV), and 332 to 356 (QYWEIQPSAFRCIHERSAVQIGNYK). Asn208 carries an N-linked (GlcNAc...) asparagine glycan. A glycan (N-linked (GlcNAc...) asparagine) is linked at Asn259. Cys310 and Cys343 are disulfide-bonded.

Belongs to the small leucine-rich proteoglycan (SLRP) family. SLRP class I subfamily. Binds to type I and type II collagen, to fibronectin and TGF-beta. Forms a ternary complex with MFAP2 and ELN. The attached glycosaminoglycan chain can be either chondroitin sulfate or dermatan sulfate depending upon the tissue of origin.

It is found in the secreted. The protein resides in the extracellular space. The protein localises to the extracellular matrix. In terms of biological role, may affect the rate of fibrils formation. The protein is Decorin (DCN) of Coturnix japonica (Japanese quail).